A 163-amino-acid polypeptide reads, in one-letter code: Ribosome maturation factor RimP (163 aa).

The interval 66–85 (ALDRDDPVPGPPYELEVSSP) is disordered.

Belongs to the RimP family.

Its subcellular location is the cytoplasm. In terms of biological role, required for maturation of 30S ribosomal subunits. The polypeptide is Ribosome maturation factor RimP (Kocuria rhizophila (strain ATCC 9341 / DSM 348 / NBRC 103217 / DC2201)).